The primary structure comprises 102 residues: Small ribosomal subunit protein uS10 (102 aa).

Belongs to the universal ribosomal protein uS10 family. In terms of assembly, part of the 30S ribosomal subunit.

Its function is as follows. Involved in the binding of tRNA to the ribosomes. This chain is Small ribosomal subunit protein uS10, found in Carboxydothermus hydrogenoformans (strain ATCC BAA-161 / DSM 6008 / Z-2901).